The following is an 858-amino-acid chain: Autoinducer 2 sensor kinase/phosphatase LuxQ (858 aa).

2 consecutive transmembrane segments (helical) span residues 14–34 and 362–382; these read STLI…GIFV and LFNF…LIQI. A Histidine kinase domain is found at 488–710; the sequence is KMSHEIRTPI…TFVVTLPVKD (223 aa). His491 carries the post-translational modification Phosphohistidine; by autocatalysis. Positions 735-850 constitute a Response regulatory domain; that stretch reads KVLLVEDNHT…ALHEAFVDFK (116 aa). Asp784 bears the 4-aspartylphosphate mark.

As to quaternary structure, binds the complex formed by the autoinducer and LuxP.

It localises to the cell inner membrane. The catalysed reaction is ATP + protein L-histidine = ADP + protein N-phospho-L-histidine.. In terms of biological role, at low cell density, in absence of autoinducer has a kinase activity, and autophosphorylates on a histidine residue. The phosphoryl group is then transferred to an aspartate residue in the response regulator domain. The phosphoryl group is transferred to LuxU, and ultimately to LuxO. At high cell density, in the presence of autoinducer, the kinase activity is inactivated, and the response regulator domain has a phosphatase activity. In Vibrio parahaemolyticus serotype O3:K6 (strain RIMD 2210633), this protein is Autoinducer 2 sensor kinase/phosphatase LuxQ (luxQ).